A 130-amino-acid chain; its full sequence is MPKKFDDIVNEMDRKIELLGEEIIKNLNLSVEGYCTNKKDICNLVIYKNNNIIKNLESLEMYSVKALCLYRPVSKDLRKLLTIIKLCSMLEKIEECAVKISFVLLNSKFNFDRNDKYIKRMASLTEEIIY.

This is an uncharacterized protein from Methanocaldococcus jannaschii (strain ATCC 43067 / DSM 2661 / JAL-1 / JCM 10045 / NBRC 100440) (Methanococcus jannaschii).